The chain runs to 508 residues: Probable cytochrome P450 6d5 (508 aa).

C453 contributes to the heme binding site.

Belongs to the cytochrome P450 family. Requires heme as cofactor.

It is found in the endoplasmic reticulum membrane. Its subcellular location is the microsome membrane. Functionally, may be involved in the metabolism of insect hormones and in the breakdown of synthetic insecticides. This chain is Probable cytochrome P450 6d5 (Cyp6d5), found in Drosophila melanogaster (Fruit fly).